A 1484-amino-acid chain; its full sequence is Ral GTPase-activating protein subunit beta (1484 aa).

2 disordered regions span residues 355–437 (PRSD…APRR) and 699–728 (ENNLKSHSRTNSGISSASGGSTEPTTPDSE). Position 359 is a phosphoserine (serine 359). Phosphothreonine occurs at positions 363 and 379. Composition is skewed to polar residues over residues 369 to 381 (SMPQSAAVNTTPP), 392 to 428 (NKATMKTSTVTTAHTSKVQHQASSTSPLSSPNQTSSE), and 701 to 725 (NLKSHSRTNSGISSASGGSTEPTTP). Phosphoserine occurs at positions 421 and 710. Threonine 724 bears the Phosphothreonine mark. Residues 1138–1382 (IGYLDLLPCR…TTLEKEVPVI (245 aa)) form the Rap-GAP domain. Residue serine 1275 is modified to Phosphoserine. The segment at 1297 to 1325 (PNHTDSLNSSQRLSPSSRMKKLPQGRPVP) is disordered. A compositionally biased stretch (low complexity) spans 1302–1313 (SLNSSQRLSPSS).

In terms of assembly, component of the heterodimeric RalGAP1 complex with RALGAPA1 and of the heterodimeric RalGAP2 complex with RALGAPA2. Heterodimerization is required for activity. As to expression, abundantly expressed in testis, pancreas, lung, thymus, brown fat, and white fat. Expressed at lower levels in the brain.

Functionally, non-catalytic subunit of the heterodimeric RalGAP1 and RalGAP2 complexes which act as GTPase activators for the Ras-like small GTPases RALA and RALB. In Mus musculus (Mouse), this protein is Ral GTPase-activating protein subunit beta (Ralgapb).